A 103-amino-acid polypeptide reads, in one-letter code: Large ribosomal subunit protein bL21 (103 aa).

It belongs to the bacterial ribosomal protein bL21 family. As to quaternary structure, part of the 50S ribosomal subunit. Contacts protein L20.

Functionally, this protein binds to 23S rRNA in the presence of protein L20. The polypeptide is Large ribosomal subunit protein bL21 (Beijerinckia indica subsp. indica (strain ATCC 9039 / DSM 1715 / NCIMB 8712)).